The following is a 376-amino-acid chain: DNA replication and repair protein RecF (376 aa).

An ATP-binding site is contributed by 35–42 (GDNGSGKT).

The protein belongs to the RecF family.

The protein localises to the cytoplasm. In terms of biological role, the RecF protein is involved in DNA metabolism; it is required for DNA replication and normal SOS inducibility. RecF binds preferentially to single-stranded, linear DNA. It also seems to bind ATP. This Agrobacterium fabrum (strain C58 / ATCC 33970) (Agrobacterium tumefaciens (strain C58)) protein is DNA replication and repair protein RecF.